Here is a 379-residue protein sequence, read N- to C-terminus: Sporozoite surface protein P36 (379 aa).

The signal sequence occupies residues 1–33 (MAYNIWEEYIMANFHNVYPVVTNLFLFIALSYS). 6-Cys domains are found at residues 69-206 (FVFF…VKAN) and 215-379 (FIKG…TVES). 3 disulfide bridges follow: Cys91–Cys101, Cys115–Cys186, and Cys129–Cys184. Asn98 and Asn118 each carry an N-linked (GlcNAc...) asparagine glycan. A glycan (N-linked (GlcNAc...) asparagine) is linked at Asn206. 3 disulfide bridges follow: Cys219/Cys243, Cys257/Cys360, and Cys295/Cys358. N-linked (GlcNAc...) asparagine glycans are attached at residues Asn298 and Asn374.

It is found in the cell surface. The protein localises to the cell membrane. Functionally, involved in sporozoite infection of hepatocytes and replication therein. The chain is Sporozoite surface protein P36 (PF36) from Plasmodium falciparum (isolate 3D7).